The chain runs to 1132 residues: Tyrosine-protein kinase JAK2 (1132 aa).

The segment at 1-239 (MGMACLTMTE…RYRFRRFIQQ (239 aa)) is interaction with cytokine/interferon/growth hormone receptors. The region spanning 37–380 (PVLQVYLYHS…GYYRLTADAH (344 aa)) is the FERM domain. Tyrosine 119 carries the post-translational modification Phosphotyrosine; by autocatalysis. Residues tyrosine 372 and tyrosine 373 each carry the phosphotyrosine modification. An SH2; atypical domain is found at 401 to 482 (HGPISMDFAI…SLKDLLNCYQ (82 aa)). Position 523 is a phosphoserine (serine 523). A Protein kinase 1 domain is found at 545-809 (LIFNESLGQG…AIIRDLNSLF (265 aa)). Phosphotyrosine is present on residues tyrosine 570 and tyrosine 813. Residues 849 to 1124 (LKFLQQLGKG…SFRDLALRVD (276 aa)) enclose the Protein kinase 2 domain. 855-863 (LGKGNFGSV) is an ATP binding site. Tyrosine 868 bears the Phosphotyrosine; by autocatalysis mark. Lysine 882 is a binding site for ATP. Residues tyrosine 966 and tyrosine 972 each carry the phosphotyrosine; by autocatalysis modification. Catalysis depends on aspartate 976, which acts as the Proton acceptor. Residues tyrosine 1007 and tyrosine 1008 each carry the phosphotyrosine; by autocatalysis modification.

Belongs to the protein kinase superfamily. Tyr protein kinase family. JAK subfamily. In terms of assembly, interacts with EPOR, LYN, SIRPA, SH2B1 and TEC. Interacts with IL23R. Interacts with SKB1. Interacts with STAM2. Interacts with IFNGR2 (via intracellular domain). Interacts with LEPR (Isoform B). Interacts with HSP90AB1; promotes functional activation in a heat shock-dependent manner. Interacts with STRA6. Interacts with RHEX; this interaction occurs in a erythropoietin (EPO)-dependent manner. Interacts with ASB2; the interaction targets JAK2 for Notch-induced proteasomal degradation. Interacts with MPL/TPOR. Mg(2+) serves as cofactor. In terms of processing, autophosphorylated, leading to regulate its activity. Leptin promotes phosphorylation on tyrosine residues, including phosphorylation on Tyr-813. Autophosphorylation on Tyr-119 in response to EPO down-regulates its kinase activity. Autophosphorylation on Tyr-868, Tyr-966 and Tyr-972 in response to growth hormone (GH) are required for maximal kinase activity. Also phosphorylated by TEC. Phosphorylated on tyrosine residues in response to interferon gamma signaling. Phosphorylated on tyrosine residues in response to a signaling cascade that is activated by increased cellular retinol. Post-translationally, undergoes Notch-induced ubiquitination and subsequent proteasomal degradation which is mediated by ASB1 or ASB2, the substrate-recognition components of probable ECS E3 ubiquitin-protein ligase complexes. Ubiquitously expressed throughout most tissues.

Its subcellular location is the endomembrane system. The protein localises to the cytoplasm. It is found in the nucleus. It catalyses the reaction L-tyrosyl-[protein] + ATP = O-phospho-L-tyrosyl-[protein] + ADP + H(+). Its activity is regulated as follows. Regulated by autophosphorylation, can both activate or decrease activity. Heme regulates its activity by enhancing the phosphorylation on Tyr-1007 and Tyr-1008. Functionally, non-receptor tyrosine kinase involved in various processes such as cell growth, development, differentiation or histone modifications. Mediates essential signaling events in both innate and adaptive immunity. In the cytoplasm, plays a pivotal role in signal transduction via its association with type I receptors such as growth hormone (GHR), prolactin (PRLR), leptin (LEPR), erythropoietin (EPOR), thrombopoietin receptor (MPL/TPOR); or type II receptors including IFN-alpha, IFN-beta, IFN-gamma and multiple interleukins. Following ligand-binding to cell surface receptors, phosphorylates specific tyrosine residues on the cytoplasmic tails of the receptor, creating docking sites for STATs proteins. Subsequently, phosphorylates the STATs proteins once they are recruited to the receptor. Phosphorylated STATs then form homodimer or heterodimers and translocate to the nucleus to activate gene transcription. For example, cell stimulation with erythropoietin (EPO) during erythropoiesis leads to JAK2 autophosphorylation, activation, and its association with erythropoietin receptor (EPOR) that becomes phosphorylated in its cytoplasmic domain. Then, STAT5 (STAT5A or STAT5B) is recruited, phosphorylated and activated by JAK2. Once activated, dimerized STAT5 translocates into the nucleus and promotes the transcription of several essential genes involved in the modulation of erythropoiesis. Part of a signaling cascade that is activated by increased cellular retinol and that leads to the activation of STAT5 (STAT5A or STAT5B). In addition, JAK2 mediates angiotensin-2-induced ARHGEF1 phosphorylation. Plays a role in cell cycle by phosphorylating CDKN1B. Cooperates with TEC through reciprocal phosphorylation to mediate cytokine-driven activation of FOS transcription. In the nucleus, plays a key role in chromatin by specifically mediating phosphorylation of 'Tyr-41' of histone H3 (H3Y41ph), a specific tag that promotes exclusion of CBX5 (HP1 alpha) from chromatin. Up-regulates the potassium voltage-gated channel activity of KCNA3. In Homo sapiens (Human), this protein is Tyrosine-protein kinase JAK2.